A 4650-amino-acid polypeptide reads, in one-letter code: Nonribosomal peptide synthetase lenA (4650 aa).

The tract at residues Gly-227 to Lys-628 is adenylation 1. In terms of domain architecture, Carrier 1 spans Pro-773 to Glu-849. Ser-810 bears the O-(pantetheine 4'-phosphoryl)serine mark. Residues Glu-890 to Gln-1212 form a condensation 1 region. The adenylation 2 stretch occupies residues Glu-1288–Arg-1622. The 78-residue stretch at Pro-1745–Asp-1822 folds into the Carrier 2 domain. An O-(pantetheine 4'-phosphoryl)serine modification is found at Ser-1782. The segment at Ala-1850–Ala-2110 is condensation 2. An adenylation 3 region spans residues Arg-2183–Gly-2511. Residues Ala-2630 to Ser-2708 form the Carrier 3 domain. At Ser-2667 the chain carries O-(pantetheine 4'-phosphoryl)serine. The epimerase stretch occupies residues Glu-2722–Asn-2998. The condensation 3 stretch occupies residues Val-3128–Leu-3565. An adenylation 4 region spans residues Cys-3578–Lys-3980. A Carrier 4 domain is found at Thr-4114–Ala-4190. Ser-4151 carries the post-translational modification O-(pantetheine 4'-phosphoryl)serine. The condensation 4 stretch occupies residues His-4249–Glu-4648.

It belongs to the NRP synthetase family. It depends on pantetheine 4'-phosphate as a cofactor.

It participates in alkaloid biosynthesis. In terms of biological role, nonribosomal peptide synthetase; part of the gene cluster that mediates the biosynthesis of the ergot alkaloids lentopeptins A and B. Within the pathway, lenA catalyzes the biosynthesis of the Ala-Val-Ala peptide chain, including a cinnamic acid moiety as the starting unit. The release of the peptide from the enzyme is accomplished via a cyclization reaction catalyzed by the terminal condensation-like (Ct) domain of lenA to form the N-acyldiketopiperazine intermediate. The reaction appears to proceed through a nucleophilic attack on the carbonyl carbon by a lone electron pair of the valine amide nitrogen. The phenylalanine ammonia-lyase lenB provides the starter unit for the synthesis of the N-acyldiketopiperazine intermediate by the NRPS lenA, while the cytochrome P450 monooxygenase lenC is involved in the post-NRPS oxidative modification steps to form lentopeptins A and B. This is Nonribosomal peptide synthetase lenA from Aspergillus lentulus.